We begin with the raw amino-acid sequence, 477 residues long: Histidine--tRNA ligase (477 aa).

It belongs to the class-II aminoacyl-tRNA synthetase family. In terms of assembly, homodimer.

It is found in the cytoplasm. It catalyses the reaction tRNA(His) + L-histidine + ATP = L-histidyl-tRNA(His) + AMP + diphosphate + H(+). This is Histidine--tRNA ligase (hisS) from Xanthomonas campestris pv. campestris (strain ATCC 33913 / DSM 3586 / NCPPB 528 / LMG 568 / P 25).